A 1040-amino-acid chain; its full sequence is Activated CDC42 kinase 1 (1040 aa).

An SAM-like domain region spans residues Met-1–Gly-110. Residues Glu-86 to Ala-109 form a disordered region. Thr-113 is modified (phosphothreonine). Residues Leu-126–Leu-385 form the Protein kinase domain. ATP contacts are provided by residues Leu-132 to Val-140 and Lys-158. Residue Asp-252 is the Proton acceptor of the active site. Phosphotyrosine; by SRC and autocatalysis is present on Tyr-284. The SH3 domain occupies Ala-388 to Gly-448. Positions Arg-505–Pro-527 are disordered. Phosphotyrosine is present on Tyr-518. The interval Asp-623–Ser-652 is required for interaction with SRC. The interval Pro-632–Tyr-635 is required for interaction with NEDD4. A disordered region spans residues Thr-722–Asp-824. An EBD domain region spans residues Gly-733–Leu-876. Pro residues-rich tracts occupy residues Gln-738 to Pro-749 and Pro-772 to Pro-783. A compositionally biased stretch (low complexity) spans Pro-802–Gly-812. Tyr-827 is modified (phosphotyrosine). An Omega-N-methylarginine modification is found at Arg-839. Tyr-859 and Tyr-872 each carry phosphotyrosine. At Ser-881 the chain carries Phosphoserine. Residues Ser-881–Arg-957 are disordered. Pro residues predominate over residues Leu-888 to Ala-903. The segment covering Asn-922–Gly-931 has biased composition (polar residues). Residues Pro-958–Glu-998 enclose the UBA domain.

The protein belongs to the protein kinase superfamily. Tyr protein kinase family. In terms of assembly, homodimer. Interacts with CDC42. Interacts with CSPG4 (activated). Interacts with MERTK (activated); stimulates autophosphorylation. May interact (phosphorylated) with HSP90AB1; maintains kinase activity. Interacts with NPHP1. Interacts with SNX9 (via SH3 domain). Interacts with SRC (via SH2 and SH3 domain). Interacts with EGFR, and this interaction is dependent on EGF stimulation and kinase activity of EGFR. Interacts (via kinase domain) with AKT1. Part of a collagen stimulated complex involved in cell migration composed of CDC42, CRK, TNK2 and BCAR1/p130cas. Interacts with BCAR1/p130cas via SH3 domains. Forms complexes with GRB2 and numerous receptor tyrosine kinases (RTK) including LTK, AXL or PDGFRL, in which GRB2 promotes RTK recruitment by TNK2. Interacts with NEDD4 (via WW3 domain). NEDD4L and EGF promote association with NEDD4. It depends on Mg(2+) as a cofactor. Post-translationally, autophosphorylation regulates kinase activity. Phosphorylation on Tyr-518 is required for interaction with SRC and is observed during association with clathrin-coated pits. In terms of processing, polyubiquitinated by NEDD4 and NEDD4L. Degradation can be induced by EGF and is lysosome-dependent.

Its subcellular location is the cell membrane. The protein localises to the nucleus. The protein resides in the endosome. It localises to the cell junction. It is found in the adherens junction. Its subcellular location is the cytoplasmic vesicle membrane. The protein localises to the cytoplasmic vesicle. The protein resides in the clathrin-coated vesicle. It localises to the membrane. It is found in the clathrin-coated pit. Its subcellular location is the cytoplasm. The protein localises to the cytosol. It carries out the reaction L-tyrosyl-[protein] + ATP = O-phospho-L-tyrosyl-[protein] + ADP + H(+). The catalysed reaction is L-seryl-[protein] + ATP = O-phospho-L-seryl-[protein] + ADP + H(+). It catalyses the reaction L-threonyl-[protein] + ATP = O-phospho-L-threonyl-[protein] + ADP + H(+). Functionally, non-receptor tyrosine-protein and serine/threonine-protein kinase that is implicated in cell spreading and migration, cell survival, cell growth and proliferation. Transduces extracellular signals to cytosolic and nuclear effectors. Phosphorylates AKT1, AR, MCF2, WASL and WWOX. Implicated in trafficking and clathrin-mediated endocytosis through binding to epidermal growth factor receptor (EGFR) and clathrin. Binds to both poly- and mono-ubiquitin and regulates ligand-induced degradation of EGFR, thereby contributing to the accumulation of EGFR at the limiting membrane of early endosomes. Downstream effector of CDC42 which mediates CDC42-dependent cell migration via phosphorylation of BCAR1. May be involved both in adult synaptic function and plasticity and in brain development. Activates AKT1 by phosphorylating it on 'Tyr-176'. Phosphorylates AR on 'Tyr-267' and 'Tyr-363', thereby promoting its recruitment to androgen-responsive enhancers (AREs). Phosphorylates WWOX on 'Tyr-287'. Phosphorylates MCF2, thereby enhancing its activity as a guanine nucleotide exchange factor (GEF) toward Rho family proteins. Contributes to the control of AXL receptor levels. Confers metastatic properties on cancer cells and promotes tumor growth by negatively regulating tumor suppressor such as WWOX and positively regulating pro-survival factors such as AKT1 and AR. This is Activated CDC42 kinase 1 from Rattus norvegicus (Rat).